We begin with the raw amino-acid sequence, 119 residues long: Ribonuclease P protein component (119 aa).

It belongs to the RnpA family. As to quaternary structure, consists of a catalytic RNA component (M1 or rnpB) and a protein subunit.

It catalyses the reaction Endonucleolytic cleavage of RNA, removing 5'-extranucleotides from tRNA precursor.. Functionally, RNaseP catalyzes the removal of the 5'-leader sequence from pre-tRNA to produce the mature 5'-terminus. It can also cleave other RNA substrates such as 4.5S RNA. The protein component plays an auxiliary but essential role in vivo by binding to the 5'-leader sequence and broadening the substrate specificity of the ribozyme. The polypeptide is Ribonuclease P protein component (Citrobacter koseri (strain ATCC BAA-895 / CDC 4225-83 / SGSC4696)).